A 456-amino-acid chain; its full sequence is Tyrosine phenol-lyase (456 aa).

K257 carries the N6-(pyridoxal phosphate)lysine modification.

This sequence belongs to the beta-eliminating lyase family. In terms of assembly, homotetramer. Pyridoxal 5'-phosphate is required as a cofactor.

It carries out the reaction L-tyrosine + H2O = phenol + pyruvate + NH4(+). The chain is Tyrosine phenol-lyase (tpl) from Citrobacter freundii.